The primary structure comprises 101 residues: Small ribosomal subunit protein uS10 (101 aa).

Belongs to the universal ribosomal protein uS10 family. As to quaternary structure, part of the 30S ribosomal subunit.

In terms of biological role, involved in the binding of tRNA to the ribosomes. The polypeptide is Small ribosomal subunit protein uS10 (Cytophaga hutchinsonii (strain ATCC 33406 / DSM 1761 / CIP 103989 / NBRC 15051 / NCIMB 9469 / D465)).